The following is a 295-amino-acid chain: Pyridoxal 5'-phosphate synthase subunit PdxS (295 aa).

Aspartate 25 serves as a coordination point for D-ribose 5-phosphate. The active-site Schiff-base intermediate with D-ribose 5-phosphate is the lysine 82. Residue glycine 154 participates in D-ribose 5-phosphate binding. Arginine 166 contributes to the D-glyceraldehyde 3-phosphate binding site. D-ribose 5-phosphate contacts are provided by residues glycine 215 and 236–237 (GS).

This sequence belongs to the PdxS/SNZ family. In terms of assembly, in the presence of PdxT, forms a dodecamer of heterodimers.

The enzyme catalyses aldehydo-D-ribose 5-phosphate + D-glyceraldehyde 3-phosphate + L-glutamine = pyridoxal 5'-phosphate + L-glutamate + phosphate + 3 H2O + H(+). The protein operates within cofactor biosynthesis; pyridoxal 5'-phosphate biosynthesis. Its function is as follows. Catalyzes the formation of pyridoxal 5'-phosphate from ribose 5-phosphate (RBP), glyceraldehyde 3-phosphate (G3P) and ammonia. The ammonia is provided by the PdxT subunit. Can also use ribulose 5-phosphate and dihydroxyacetone phosphate as substrates, resulting from enzyme-catalyzed isomerization of RBP and G3P, respectively. The protein is Pyridoxal 5'-phosphate synthase subunit PdxS of Bacillus cereus (strain G9842).